A 625-amino-acid chain; its full sequence is MKREYQEAGGSSGGGSSADMGSCKDKVMAGAAGEEEDVDELLAALGYKVRSSDMADVAQKLEQLEMAMGMGGVSAPGAADDGFVSHLATDTVHYNPSDLSSWVESMLSELNAPLPPIPPAPPAARHASTSSTVTGGGGSGFFELPAAADSSSSTYALRPISLPVVATADPSAADSARDTKRMRTGGGSTSSSSSSSSSLGGGASRGSVVEAAPPAMQGAAAANAPAVPVVVVDTQEAGIRLVHALLACAEAVQQENFAAAEALVKQIPTLAASQGGAMRKVAAYFGEALARRVYRFRPADSTLLDAAFADLLHAHFYESCPYLKFAHFTANQAILEAFAGCRRVHVVDFGIKQGMQWPALLQALALRPGGPPSFRLTGVGPPQPDETDALQQVGWKLAQFAHTIRVDFQYRGLVAATLADLEPFMLQPEGEADANEEPEVIAVNSVFELHRLLAQPGALEKVLGTVHAVRPRIVTVVEQEANHNSGSFLDRFTESLHYYSTMFDSLEGGSSGQAELSPPAAGGGGGTDQVMSEVYLGRQICNVVACEGAERTERHETLGQWRNRLGRAGFEPVHLGSNAYKQASTLLALFAGGDGYRVEEKEGCLTLGWHTRPLIATSAWRVAAA.

Positions 1-34 (MKREYQEAGGSSGGGSSADMGSCKDKVMAGAAGE) are disordered. The DELLA motif signature appears at 39-43 (DELLA). A disordered region spans residues 167–208 (TADPSAADSARDTKRMRTGGGSTSSSSSSSSSLGGGASRGSV). Residues 189-198 (TSSSSSSSSS) are compositionally biased toward low complexity. Residues 232–621 (VDTQEAGIRL…RPLIATSAWR (390 aa)) form the GRAS domain. Residues 239 to 294 (IRLVHALLACAEAVQQENFAAAEALVKQIPTLAASQGGAMRKVAAYFGEALARRVY) are leucine repeat I (LRI). A required for possible homodimerization region spans residues 241–278 (LVHALLACAEAVQQENFAAAEALVKQIPTLAASQGGAM). Residues 246 to 250 (LACAE) carry the LxCxE motif motif. The segment at 313–378 (HAHFYESCPY…GGPPSFRLTG (66 aa)) is VHIID. The short motif at 344 to 348 (VHVVD) is the VHIID element. The segment at 392–431 (QVGWKLAQFAHTIRVDFQYRGLVAATLADLEPFMLQPEGE) is leucine repeat II (LRII). The PFYRE stretch occupies residues 441-542 (IAVNSVFELH…EVYLGRQICN (102 aa)). The short motif at 449-453 (LHRLL) is the LXXLL motif element. The segment at 545-621 (ACEGAERTER…RPLIATSAWR (77 aa)) is SAW.

Belongs to the GRAS family. DELLA subfamily.

Functionally, probable transcriptional regulator that acts as a repressor of the gibberellin (GA) signaling pathway. Probably acts by participating in large multiprotein complexes that repress transcription of GA-inducible genes. Upon GA application, it is degraded by the proteasome, allowing the GA signaling pathway. In contrast, its overexpression prevents the GA signaling pathway and induces a dwarf phenotype. This is DELLA protein SLR1 from Oryza sativa subsp. indica (Rice).